A 362-amino-acid chain; its full sequence is Holliday junction branch migration complex subunit RuvB (362 aa).

Residues 1 to 183 (MADSSLVGGG…FGFTGHLEFY (183 aa)) form a large ATPase domain (RuvB-L) region. ATP contacts are provided by residues leucine 22, arginine 23, glycine 64, lysine 67, threonine 68, threonine 69, 130 to 132 (EDF), arginine 173, tyrosine 183, and arginine 220. Residue threonine 68 participates in Mg(2+) binding. The tract at residues 184–254 (SVEELELVLR…TASAALDMYE (71 aa)) is small ATPAse domain (RuvB-S). Residues 257–362 (KRGLDRLDRS…PVAEWLPNGQ (106 aa)) form a head domain (RuvB-H) region. Residues arginine 312 and arginine 317 each contribute to the DNA site.

It belongs to the RuvB family. Homohexamer. Forms an RuvA(8)-RuvB(12)-Holliday junction (HJ) complex. HJ DNA is sandwiched between 2 RuvA tetramers; dsDNA enters through RuvA and exits via RuvB. An RuvB hexamer assembles on each DNA strand where it exits the tetramer. Each RuvB hexamer is contacted by two RuvA subunits (via domain III) on 2 adjacent RuvB subunits; this complex drives branch migration. In the full resolvosome a probable DNA-RuvA(4)-RuvB(12)-RuvC(2) complex forms which resolves the HJ.

Its subcellular location is the cytoplasm. The enzyme catalyses ATP + H2O = ADP + phosphate + H(+). The RuvA-RuvB-RuvC complex processes Holliday junction (HJ) DNA during genetic recombination and DNA repair, while the RuvA-RuvB complex plays an important role in the rescue of blocked DNA replication forks via replication fork reversal (RFR). RuvA specifically binds to HJ cruciform DNA, conferring on it an open structure. The RuvB hexamer acts as an ATP-dependent pump, pulling dsDNA into and through the RuvAB complex. RuvB forms 2 homohexamers on either side of HJ DNA bound by 1 or 2 RuvA tetramers; 4 subunits per hexamer contact DNA at a time. Coordinated motions by a converter formed by DNA-disengaged RuvB subunits stimulates ATP hydrolysis and nucleotide exchange. Immobilization of the converter enables RuvB to convert the ATP-contained energy into a lever motion, pulling 2 nucleotides of DNA out of the RuvA tetramer per ATP hydrolyzed, thus driving DNA branch migration. The RuvB motors rotate together with the DNA substrate, which together with the progressing nucleotide cycle form the mechanistic basis for DNA recombination by continuous HJ branch migration. Branch migration allows RuvC to scan DNA until it finds its consensus sequence, where it cleaves and resolves cruciform DNA. The protein is Holliday junction branch migration complex subunit RuvB of Arthrobacter sp. (strain FB24).